The primary structure comprises 205 residues: Outer-membrane lipoprotein LolB (205 aa).

The first 17 residues, 1 to 17, serve as a signal peptide directing secretion; sequence MFLRHVIVFSLIALLTG. Cysteine 18 is lipidated: N-palmitoyl cysteine. The S-diacylglycerol cysteine moiety is linked to residue cysteine 18.

Belongs to the LolB family. As to quaternary structure, monomer.

The protein localises to the cell outer membrane. Its function is as follows. Plays a critical role in the incorporation of lipoproteins in the outer membrane after they are released by the LolA protein. In Pseudomonas savastanoi pv. phaseolicola (strain 1448A / Race 6) (Pseudomonas syringae pv. phaseolicola (strain 1448A / Race 6)), this protein is Outer-membrane lipoprotein LolB.